A 463-amino-acid chain; its full sequence is MAIPPEVHSGLLSAGCGPGSLLVAAQQWQELSDQYALACAELGQLLGEVQASSWQGTAATQYVAAHGPYLAWLEQTAINSAVTAAQHVAAAAAYCSALAAMPTPAELAANHAIHGVLIATNFFGINTVPIALNEADYVRMWLQAADTMAAYQAVADAATVAVPSTQPAPPIRAPGGDAADTRLDVLSSIGQLIRDILDFIANPYKYFLEFFEQFGFSPAVTVVLALVALQLYDFLWYPYYASYGLLLLPFFTPTLSALTALSALIHLLNLPPAGLLPIAAALGPGDQWGANLAVAVTPATAAVPGGSPPTSNPAPAAPSSNSVGSASAAPGISYAVPGLAPPGVSSGPKAGTKSPDTAADTLATAGAARPGLARAHRRKRSESGVGIRGYRDEFLDATATVDAATDVPAPANAAGSQGAGTLGFAGTAPTTSGAAAGMVQLSSHSTSTTVPLLPTTWTTDAEQ.

6 consecutive transmembrane segments (helical) span residues 3–23 (IPPE…SLLV), 88–108 (VAAA…AELA), 112–132 (AIHG…PIAL), 216–236 (FSPA…DFLW), 245–265 (LLLL…SALI), and 276–296 (LPIA…AVAV). The tract at residues 303 to 322 (VPGGSPPTSNPAPAAPSSNS) is disordered. A compositionally biased stretch (pro residues) spans 306–316 (GSPPTSNPAPA). The next 2 helical transmembrane spans lie at 323–343 (VGSA…APPG) and 419–439 (AGTL…AGMV).

Belongs to the mycobacterial PPE family.

The protein localises to the cell membrane. This is an uncharacterized protein from Mycobacterium tuberculosis (strain CDC 1551 / Oshkosh).